A 440-amino-acid chain; its full sequence is Xylose isomerase (440 aa).

Residues His-101 and Asp-104 contribute to the active site. Glu-232, Glu-268, His-271, Asp-296, Asp-307, Asp-309, and Asp-339 together coordinate Mg(2+).

This sequence belongs to the xylose isomerase family. Homotetramer. Mg(2+) serves as cofactor.

The protein resides in the cytoplasm. It catalyses the reaction alpha-D-xylose = alpha-D-xylulofuranose. This is Xylose isomerase from Escherichia coli O157:H7.